The primary structure comprises 349 residues: Isopentenyl-diphosphate delta-isomerase (349 aa).

6–7 (RK) is a binding site for substrate. Residues 62 to 64 (AMT), serine 93, and asparagine 122 each bind FMN. Residue glutamine 152 coordinates substrate. Position 153 (glutamate 153) interacts with Mg(2+). Residues lysine 184, threonine 214, 258-259 (GG), and 280-281 (AG) contribute to the FMN site.

Belongs to the IPP isomerase type 2 family. Homooctamer. Dimer of tetramers. FMN is required as a cofactor. The cofactor is NADPH. Requires Mg(2+) as cofactor.

The protein localises to the cytoplasm. It carries out the reaction isopentenyl diphosphate = dimethylallyl diphosphate. Functionally, involved in the biosynthesis of isoprenoids. Catalyzes the 1,3-allylic rearrangement of the homoallylic substrate isopentenyl (IPP) to its allylic isomer, dimethylallyl diphosphate (DMAPP). This Bacillus cereus (strain B4264) protein is Isopentenyl-diphosphate delta-isomerase.